The following is a 205-amino-acid chain: Probable thymidylate kinase (205 aa).

10–17 (GIDGSGKT) lines the ATP pocket.

This sequence belongs to the thymidylate kinase family.

It carries out the reaction dTMP + ATP = dTDP + ADP. The polypeptide is Probable thymidylate kinase (tmk) (Pyrococcus horikoshii (strain ATCC 700860 / DSM 12428 / JCM 9974 / NBRC 100139 / OT-3)).